Reading from the N-terminus, the 130-residue chain is Ribosome-binding factor A (130 aa).

Belongs to the RbfA family. In terms of assembly, monomer. Binds 30S ribosomal subunits, but not 50S ribosomal subunits or 70S ribosomes.

It is found in the cytoplasm. Its function is as follows. One of several proteins that assist in the late maturation steps of the functional core of the 30S ribosomal subunit. Associates with free 30S ribosomal subunits (but not with 30S subunits that are part of 70S ribosomes or polysomes). Required for efficient processing of 16S rRNA. May interact with the 5'-terminal helix region of 16S rRNA. The sequence is that of Ribosome-binding factor A from Prochlorococcus marinus (strain MIT 9301).